We begin with the raw amino-acid sequence, 192 residues long: Phosphoheptose isomerase (192 aa).

The SIS domain occupies 37–192 (LADSFKGGGK…IQLIEKEMVK (156 aa)). Residue 52 to 54 (NGG) participates in substrate binding. Zn(2+) contacts are provided by His61 and Glu65. Residues Glu65, 93–94 (ND), 119–121 (STS), Ser124, and Gln172 each bind substrate. Residues Gln172 and His180 each contribute to the Zn(2+) site.

This sequence belongs to the SIS family. GmhA subfamily. In terms of assembly, homotetramer. Requires Zn(2+) as cofactor.

It is found in the cytoplasm. The catalysed reaction is 2 D-sedoheptulose 7-phosphate = D-glycero-alpha-D-manno-heptose 7-phosphate + D-glycero-beta-D-manno-heptose 7-phosphate. Its pathway is carbohydrate biosynthesis; D-glycero-D-manno-heptose 7-phosphate biosynthesis; D-glycero-alpha-D-manno-heptose 7-phosphate and D-glycero-beta-D-manno-heptose 7-phosphate from sedoheptulose 7-phosphate: step 1/1. Catalyzes the isomerization of sedoheptulose 7-phosphate in D-glycero-D-manno-heptose 7-phosphate. The protein is Phosphoheptose isomerase of Escherichia coli O7:K1 (strain IAI39 / ExPEC).